We begin with the raw amino-acid sequence, 440 residues long: Trigger factor (440 aa).

Positions 163-248 (NDTVSINFKG…INSIKEKVLP (86 aa)) constitute a PPIase FKBP-type domain.

This sequence belongs to the FKBP-type PPIase family. Tig subfamily.

Its subcellular location is the cytoplasm. The enzyme catalyses [protein]-peptidylproline (omega=180) = [protein]-peptidylproline (omega=0). Its function is as follows. Involved in protein export. Acts as a chaperone by maintaining the newly synthesized protein in an open conformation. Functions as a peptidyl-prolyl cis-trans isomerase. This is Trigger factor from Finegoldia magna (strain ATCC 29328 / DSM 20472 / WAL 2508) (Peptostreptococcus magnus).